Reading from the N-terminus, the 192-residue chain is Casparian strip membrane protein 1 (192 aa).

At 1–30 the chain is on the cytoplasmic side; sequence MSTTVDVPESSNVAKGKAIAVARPGGWKKG. The chain crosses the membrane as a helical span at residues 31–51; sequence LAIMDFILRLGGIAASLGAAA. The Extracellular portion of the chain corresponds to 52 to 80; it reads TMGTSDQTLPFFTQFFQFEASYDSFTTFQ. A helical transmembrane segment spans residues 81-101; it reads FFVITMALVAGYLVLSLPFSV. The Cytoplasmic segment spans residues 102-113; the sequence is VAIIRPHAPGPR. The chain crosses the membrane as a helical span at residues 114-134; it reads LFLIILDTVFLTLATASGASA. Residues 135–166 are Extracellular-facing; sequence AAIVYLAHNGNQDSNWLAICNQFGDFCAQTSG. The chain crosses the membrane as a helical span at residues 167 to 187; it reads AVVASFVAVVILVLLVIMSAL. The Cytoplasmic portion of the chain corresponds to 188–192; the sequence is ALRRH.

It belongs to the Casparian strip membrane proteins (CASP) family. Homodimer and heterodimers.

It localises to the cell membrane. Regulates membrane-cell wall junctions and localized cell wall deposition. Required for establishment of the Casparian strip membrane domain (CSD) and the subsequent formation of Casparian strips, a cell wall modification of the root endodermis that determines an apoplastic barrier between the intraorganismal apoplasm and the extraorganismal apoplasm and prevents lateral diffusion. The sequence is that of Casparian strip membrane protein 1 from Vigna unguiculata (Cowpea).